Consider the following 117-residue polypeptide: Probable non-functional immunoglobulin heavy variable 1-38-4 (117 aa).

The N-terminal stretch at 1-19 (MDWNWRILFLVVATTGAHS) is a signal peptide. The interval 20–44 (QVQLVQSWAEVRKSGASVKVSCSFS) is framework-1. The Ig-like domain occupies 20–117 (QVQLVQSWAE…EDMAVYYYAR (98 aa)). Residues 45-52 (GFTITSYG) are complementarity-determining-1. The framework-2 stretch occupies residues 53 to 69 (IHWVQQSPGQGLEWMGW). The segment at 70–77 (INPGNGSP) is complementarity-determining-2. An N-linked (GlcNAc...) asparagine glycan is attached at Asn-74. Residues 78–115 (SYAKKFQGRFTMTRDMSTTTAYTDLSSLTSEDMAVYYY) are framework-3. Positions 116–117 (AR) are complementarity-determining-3.

As to quaternary structure, most probably, the immunoglobulin is not assembled due to incorrect folding of heavy chain. Immunoglobulins are composed of two identical heavy chains and two identical light chains; disulfide-linked.

The protein resides in the secreted. The protein localises to the cell membrane. Its function is as follows. Probable non-functional open reading frame (ORF) of V region of the variable domain of immunoglobulin heavy chains. Non-functional ORF generally cannot participate in the synthesis of a productive immunoglobulin chain due to altered V-(D)-J or switch recombination and/or splicing site (at mRNA level) and/or conserved amino acid change (protein level). Immunoglobulins, also known as antibodies, are membrane-bound or secreted glycoproteins produced by B lymphocytes. In the recognition phase of humoral immunity, the membrane-bound immunoglobulins serve as receptors which, upon binding of a specific antigen, trigger the clonal expansion and differentiation of B lymphocytes into immunoglobulins-secreting plasma cells. Secreted immunoglobulins mediate the effector phase of humoral immunity, which results in the elimination of bound antigens. The antigen binding site is formed by the variable domain of one heavy chain, together with that of its associated light chain. Thus, each immunoglobulin has two antigen binding sites with remarkable affinity for a particular antigen. The variable domains are assembled by a process called V-(D)-J rearrangement and can then be subjected to somatic hypermutations which, after exposure to antigen and selection, allow affinity maturation for a particular antigen. In Homo sapiens (Human), this protein is Probable non-functional immunoglobulin heavy variable 1-38-4.